The chain runs to 239 residues: Purine nucleoside phosphorylase DeoD-type 1 (239 aa).

H5 contributes to the a purine D-ribonucleoside binding site. Phosphate contacts are provided by residues G21, R25, R44, and 88–91 (RVGS). A purine D-ribonucleoside is bound by residues 180 to 182 (EME) and 204 to 205 (SD). D205 (proton donor) is an active-site residue.

Belongs to the PNP/UDP phosphorylase family. In terms of assembly, homohexamer; trimer of homodimers.

The enzyme catalyses a purine D-ribonucleoside + phosphate = a purine nucleobase + alpha-D-ribose 1-phosphate. It catalyses the reaction a purine 2'-deoxy-D-ribonucleoside + phosphate = a purine nucleobase + 2-deoxy-alpha-D-ribose 1-phosphate. Functionally, catalyzes the reversible phosphorolytic breakdown of the N-glycosidic bond in the beta-(deoxy)ribonucleoside molecules, with the formation of the corresponding free purine bases and pentose-1-phosphate. The sequence is that of Purine nucleoside phosphorylase DeoD-type 1 from Vibrio parahaemolyticus serotype O3:K6 (strain RIMD 2210633).